A 475-amino-acid chain; its full sequence is Putative response regulator NtrX-like (475 aa).

Positions 5-121 (DVLILDDEES…KLIILLKRAC (117 aa)) constitute a Response regulatory domain. Position 54 is a 4-aspartylphosphate (Asp-54). A Sigma-54 factor interaction domain is found at 143-369 (LVGGCSVTLK…LRNVVEWTLI (227 aa)). Residues 171-178 (GKVGSGKE) and 232-241 (ANNGTLYIDE) contribute to the ATP site.

Member of the two-component regulatory system RT0550/RT0603. The protein is Putative response regulator NtrX-like of Rickettsia typhi (strain ATCC VR-144 / Wilmington).